The primary structure comprises 66 residues: Stress-induced protein KIN1 (66 aa).

Positions 1–13 (MSETNKNAFQAGQ) are enriched in polar residues. A disordered region spans residues 1–52 (MSETNKNAFQAGQTAGKAEEKSNVLLDKAKDAAAGAGAGAQQAGKSVSDAAA). Residues 17–31 (KAEEKSNVLLDKAKD) are compositionally biased toward basic and acidic residues. Repeats lie at residues 31–35 (DAAAG) and 49–53 (DAAAG). Over residues 32-45 (AAAGAGAGAQQAGK) the composition is skewed to low complexity.

This Arabidopsis thaliana (Mouse-ear cress) protein is Stress-induced protein KIN1 (KIN1).